A 734-amino-acid polypeptide reads, in one-letter code: ATP-dependent RNA helicase SUV3L, mitochondrial (734 aa).

A mitochondrion-targeting transit peptide spans 1–60 (MAAAAAIAAALLRRSTSSQHHRRILLLPLLSHLQRAAPRSPSPWDPPPHHRFFFSSDVTA). The disordered stretch occupies residues 58–88 (VTAEGDSKPRPPLDGKQLWREVSTSEPATGA). Positions 62 to 76 (GDSKPRPPLDGKQLW) are enriched in basic and acidic residues. The region spanning 198-356 (FARAMRRRVV…RFKPLVVEAK (159 aa)) is the Helicase ATP-binding domain. 211–218 (GPTNSGKT) contacts ATP. The 169-residue stretch at 357-525 (TLLGDLKNVR…SFAIQFPDLT (169 aa)) folds into the Helicase C-terminal domain. N-linked (GlcNAc...) asparagine glycans are attached at residues Asn-594 and Asn-614. The disordered stretch occupies residues 667-734 (ASWKPTSRQQ…QDPSSLNFVA (68 aa)). Acidic residues predominate over residues 684 to 693 (EEDNDVEQAS). Residues 695 to 709 (DNAKNDSEDGYERSI) show a composition bias toward basic and acidic residues. Asn-699 carries N-linked (GlcNAc...) asparagine glycosylation. Residues 725–734 (QDPSSLNFVA) show a composition bias toward polar residues.

It belongs to the helicase family. As to quaternary structure, homodimer; in free form. Component of the mitochondrial degradosome (mtEXO) complex which is a heteropentamer containing 2 copies of SUPV3L1 and 3 copies of PNPT1. Requires Mg(2+) as cofactor. Mn(2+) is required as a cofactor.

Its subcellular location is the nucleus. The protein localises to the mitochondrion matrix. It localises to the mitochondrion nucleoid. The enzyme catalyses ATP + H2O = ADP + phosphate + H(+). Major helicase player in mitochondrial RNA metabolism. Component of the mitochondrial degradosome (mtEXO) complex, that degrades 3' overhang double-stranded RNA with a 3'-to-5' directionality in an ATP-dependent manner. ATPase and ATP-dependent multisubstrate helicase, able to unwind double-stranded (ds) DNA and RNA, and RNA/DNA heteroduplexes in the 5'-to-3' direction. Plays a role in the RNA surveillance system in mitochondria; regulates the stability of mature mRNAs, the removal of aberrantly formed mRNAs and the rapid degradation of non coding processing intermediates. Confers salinity and drought stress tolerances by maintaining both photosynthesis and antioxidant machinery, probably via an increase in plant hormones levels such as gibberellic acid (GA(3)), the cytokinin zeatin (Z) and indole-3-acetic acid (IAA). The chain is ATP-dependent RNA helicase SUV3L, mitochondrial from Oryza sativa subsp. japonica (Rice).